A 72-amino-acid chain; its full sequence is Translation initiation factor IF-1 (72 aa).

Residues 1–72 (MAKEDNIEMQ…TKGRIVFRAR (72 aa)) enclose the S1-like domain.

The protein belongs to the IF-1 family. Component of the 30S ribosomal translation pre-initiation complex which assembles on the 30S ribosome in the order IF-2 and IF-3, IF-1 and N-formylmethionyl-tRNA(fMet); mRNA recruitment can occur at any time during PIC assembly.

It is found in the cytoplasm. Its function is as follows. One of the essential components for the initiation of protein synthesis. Stabilizes the binding of IF-2 and IF-3 on the 30S subunit to which N-formylmethionyl-tRNA(fMet) subsequently binds. Helps modulate mRNA selection, yielding the 30S pre-initiation complex (PIC). Upon addition of the 50S ribosomal subunit IF-1, IF-2 and IF-3 are released leaving the mature 70S translation initiation complex. This chain is Translation initiation factor IF-1, found in Shewanella baltica (strain OS155 / ATCC BAA-1091).